Consider the following 185-residue polypeptide: dCTP deaminase (185 aa).

DCTP contacts are provided by residues 107–112, 131–133, Gln-152, Tyr-166, and Gln-176; these read KSTYAR and TLE. Glu-133 functions as the Proton donor/acceptor in the catalytic mechanism.

The protein belongs to the dCTP deaminase family. As to quaternary structure, homotrimer.

It carries out the reaction dCTP + H2O + H(+) = dUTP + NH4(+). It participates in pyrimidine metabolism; dUMP biosynthesis; dUMP from dCTP (dUTP route): step 1/2. In terms of biological role, catalyzes the deamination of dCTP to dUTP. In Wolbachia sp. subsp. Brugia malayi (strain TRS), this protein is dCTP deaminase.